The primary structure comprises 230 residues: UPF0173 metal-dependent hydrolase MK1542 (230 aa).

It belongs to the UPF0173 family.

This Methanopyrus kandleri (strain AV19 / DSM 6324 / JCM 9639 / NBRC 100938) protein is UPF0173 metal-dependent hydrolase MK1542.